An 864-amino-acid polypeptide reads, in one-letter code: MARALADLSVNLQVPRVVPSPDSDSDTDLEDPSPRRSAGGLHRSQVIHSGHFMVSSPHSDSLTRRRDQEGPVGLADFGPRSIDPTLTHLFECLSLAYSGKLVSPKWKNFKGLKLLCRDKIRLNNAIWRAWYIQYVQRRKSPVCGFVTPLQGSEADEHRKPEAVILEGNYWKRRIEVVMREYHKWRIYYKKRLRKSSREGDFLAPKQVEGGWPPPERWCEQLFSSVVPVLLGGSEEEPGGRQLLDLDCFLSDISDTLFTMTQPSPSSLQLPPEDAYVGNADMIQPDLTPLQPSLDDFMEISDFFTNYRPPQTPTSSNYIESPSFGPMADSLFSSGILAPEMPSPASSSSSSGMTPHSGNTRLQARNSCSGPLDPNPFLSSEFLLPEDPKTKIPPAPGPTPLLPFPTPVKVHGLEPCTPSPFPTMAPPPSLLPEESLLSARFPFTSAPPAPGVSTLPAPTTFVPTPQPGPGPVPFSVDHLPHGYLEPVFGPHFTVPQGMQPRCKPSSPSPGGQKASPPTLASATASPTATATARDNNPCLTQLLRAAKPEQALEPPTMPGTLLRPPESPQDTVSEIPRARAFFPPIPAPTPPRPPPGPATLAPPRSLVVPKAERLSPPASSGSERRLSGDLNSIQPSGALSVHLSPPQTVLSRGRVDNNKMENRRITHISAEQKRRFNIKLGFDTLHGLVSTLSAQPSLKVSKATTLQKTAEYILMLQQERAAMQEEAQQLRDEIEELNAAINLCQQQLPATGVPITHQRFDQMRDMFDDYVRTRTLHNWKFWVFSILIRPLFESFNGMVSTASLHSLRQTSLAWLEQYCSLPALRPTVLNSLRQLSTSTSILTDPSLVPEQATRAVTEGTLGRPL.

Disordered regions lie at residues 15 to 41 (PRVV…AGGL) and 53 to 77 (MVSS…LADF). Ser-20, Ser-23, and Ser-25 each carry phosphoserine. At Thr-27 the chain carries Phosphothreonine. Position 196 is a phosphoserine (Ser-196). Disordered stretches follow at residues 332–397 (SSGI…APGP), 449–468 (PGVS…QPGP), 489–533 (PHFT…TARD), 547–570 (PEQA…PQDT), and 583–602 (PIPA…LAPP). Positions 351 to 368 (GMTPHSGNTRLQARNSCS) are enriched in polar residues. A compositionally biased stretch (low complexity) spans 513 to 531 (ASPPTLASATASPTATATA). Ser-566 is subject to Phosphoserine; by AMPK. The span at 583–596 (PIPAPTPPRPPPGP) shows a compositional bias: pro residues. Residues Ser-614, Ser-626, and Ser-643 each carry the phosphoserine modification. In terms of domain architecture, bHLH spans 661–715 (NRRITHISAEQKRRFNIKLGFDTLHGLVSTLSAQPSLKVSKATTLQKTAEYILML). Residues 715–736 (LQQERAAMQEEAQQLRDEIEEL) form a leucine-zipper region.

As to quaternary structure, binds DNA as a heterodimer with TCFL4/MLX. Post-translationally, phosphorylation at Ser-566 by AMPK inactivates the DNA-binding activity. As to expression, expressed in the ventricular and intermediate zones of the developing spinal cord of 12.5 dpc embryos. In later embryos expressed in a variety of tissues.

The protein localises to the nucleus. In terms of biological role, transcriptional repressor. Binds to the canonical and non-canonical E box sequences 5'-CACGTG-3'. In Mus musculus (Mouse), this protein is Carbohydrate-responsive element-binding protein (Mlxipl).